The sequence spans 200 residues: ATP-dependent Clp protease proteolytic subunit (200 aa).

S102 (nucleophile) is an active-site residue. Residue H127 is part of the active site.

Belongs to the peptidase S14 family. In terms of assembly, fourteen ClpP subunits assemble into 2 heptameric rings which stack back to back to give a disk-like structure with a central cavity, resembling the structure of eukaryotic proteasomes.

The protein resides in the cytoplasm. It catalyses the reaction Hydrolysis of proteins to small peptides in the presence of ATP and magnesium. alpha-casein is the usual test substrate. In the absence of ATP, only oligopeptides shorter than five residues are hydrolyzed (such as succinyl-Leu-Tyr-|-NHMec, and Leu-Tyr-Leu-|-Tyr-Trp, in which cleavage of the -Tyr-|-Leu- and -Tyr-|-Trp bonds also occurs).. Functionally, cleaves peptides in various proteins in a process that requires ATP hydrolysis. Has a chymotrypsin-like activity. Plays a major role in the degradation of misfolded proteins. The protein is ATP-dependent Clp protease proteolytic subunit of Dehalococcoides mccartyi (strain ATCC BAA-2100 / JCM 16839 / KCTC 5957 / BAV1).